We begin with the raw amino-acid sequence, 597 residues long: MQHIRNFSIIAHIDHGKSTLADRLIQRCGGLAAREMSAQVLDSMDIERERGITIKAQTAALEYKAQDGKVYNLNLIDTPGHVDFSYEVSRSLSACEGALLVVDASQGVEAQTVANCYTAIDLGVEVLAVLNKMDLPQADPEGARQEVEDVIGIDASDAVLASAKTGMGIDEILEAIVARVPSPEGDPEAALQALIIDSWFDNYVGVVMLVRIVNGVLRPKDKILLMASGATHLCEQTGVFTPKSQPRAQLSAGEVGFIIAGIKELAHAKVGDTITLAGKPAAAPLPGFKEVQPQVFAGLYPVESSEYDQLRDSLEKLKLNDAALMFEPEVSQALGFGFRCGFLGLLHMEIVQERLEREFDMDIITTAPSVVYEVVERDGTVLTIESPSRMPEVGKIAEIREPIVKVTLFMPQEYVGPVMTLCNNKRGNQINMTYHGRQVHLTYEIPLAEIVLDFFDRLKSVSRGYASMDYEFLEYRPADVVKVDLLINGDRVDALAMIVHRSNARYRARDVVSRMRALIPRQMYDVAIQAAIGAEVIARENVKALRKNVLAKCYGGDISRKKKLLEKQKAGKKRMKQVGTVEIPQEAFLAILQVEDK.

Positions 2-184 (QHIRNFSIIA…AIVARVPSPE (183 aa)) constitute a tr-type G domain. Residues 14–19 (DHGKST) and 131–134 (NKMD) each bind GTP.

It belongs to the TRAFAC class translation factor GTPase superfamily. Classic translation factor GTPase family. LepA subfamily.

The protein resides in the cell inner membrane. It catalyses the reaction GTP + H2O = GDP + phosphate + H(+). Required for accurate and efficient protein synthesis under certain stress conditions. May act as a fidelity factor of the translation reaction, by catalyzing a one-codon backward translocation of tRNAs on improperly translocated ribosomes. Back-translocation proceeds from a post-translocation (POST) complex to a pre-translocation (PRE) complex, thus giving elongation factor G a second chance to translocate the tRNAs correctly. Binds to ribosomes in a GTP-dependent manner. This Bordetella avium (strain 197N) protein is Elongation factor 4.